Reading from the N-terminus, the 346-residue chain is Probable electron transfer flavoprotein subunit alpha, mitochondrial (346 aa).

FAD is bound at residue 285 to 313 (LYVAIGISGAIQHLAGMKESKMIIAINKD).

It belongs to the ETF alpha-subunit/FixB family. As to quaternary structure, heterodimer of an alpha and a beta subunit. Requires FAD as cofactor.

The protein resides in the mitochondrion matrix. In terms of biological role, the electron transfer flavoprotein serves as a specific electron acceptor for several dehydrogenases, including five acyl-CoA dehydrogenases, glutaryl-CoA and sarcosine dehydrogenase. It transfers the electrons to the main mitochondrial respiratory chain via ETF-ubiquinone oxidoreductase (ETF dehydrogenase). This chain is Probable electron transfer flavoprotein subunit alpha, mitochondrial (ETF1), found in Cryptococcus neoformans var. neoformans serotype D (strain B-3501A) (Filobasidiella neoformans).